The following is a 267-amino-acid chain: Phosphate import ATP-binding protein PstB 1 (267 aa).

An ABC transporter domain is found at 21–262; sequence LETKDLHVYY…AALQSTSDYV (242 aa). 53-60 is an ATP binding site; the sequence is GPSGCGKS.

It belongs to the ABC transporter superfamily. Phosphate importer (TC 3.A.1.7) family. As to quaternary structure, the complex is composed of two ATP-binding proteins (PstB), two transmembrane proteins (PstC and PstA) and a solute-binding protein (PstS).

It is found in the cell membrane. The enzyme catalyses phosphate(out) + ATP + H2O = ADP + 2 phosphate(in) + H(+). Part of the ABC transporter complex PstSACB involved in phosphate import. Responsible for energy coupling to the transport system. In Streptococcus thermophilus (strain CNRZ 1066), this protein is Phosphate import ATP-binding protein PstB 1.